A 236-amino-acid polypeptide reads, in one-letter code: Sugar fermentation stimulation protein homolog (236 aa).

It belongs to the SfsA family.

This is Sugar fermentation stimulation protein homolog from Gloeobacter violaceus (strain ATCC 29082 / PCC 7421).